The primary structure comprises 139 residues: Peptide methionine sulfoxide reductase B4 (139 aa).

Alanine 2 carries the N-acetylalanine modification. The MsrB domain maps to 12 to 133 (EEEWRAVLSP…NSVSINFNPA (122 aa)). 4 residues coordinate Zn(2+): cysteine 51, cysteine 54, cysteine 97, and cysteine 100. Residues cysteine 69 and cysteine 122 are joined by a disulfide bond. Cysteine 122 acts as the Nucleophile in catalysis.

This sequence belongs to the MsrB Met sulfoxide reductase family. Zn(2+) is required as a cofactor.

Its subcellular location is the cytoplasm. It localises to the cytosol. The catalysed reaction is L-methionyl-[protein] + [thioredoxin]-disulfide + H2O = L-methionyl-(R)-S-oxide-[protein] + [thioredoxin]-dithiol. Functionally, catalyzes the reduction of methionine sulfoxide (MetSO) to methionine in proteins. Plays a protective role against oxidative stress by restoring activity to proteins that have been inactivated by methionine oxidation. MSRB family specifically reduces the MetSO R-enantiomer. This Arabidopsis thaliana (Mouse-ear cress) protein is Peptide methionine sulfoxide reductase B4 (MSRB4).